We begin with the raw amino-acid sequence, 805 residues long: Mitochondrial intermediate peptidase (805 aa).

The transit peptide at 1 to 25 directs the protein to the mitochondrion; that stretch reads MIQPLVKASRPRLWVCSDCLLRRTL. Zn(2+) is bound at residue His578. The active site involves Glu579. Positions 582 and 585 each coordinate Zn(2+).

The protein belongs to the peptidase M3 family. Zn(2+) serves as cofactor.

The protein localises to the mitochondrion matrix. It carries out the reaction Release of an N-terminal octapeptide as second stage of processing of some proteins imported into the mitochondrion.. In terms of biological role, cleaves proteins, imported into the mitochondrion, to their mature size. While most mitochondrial precursor proteins are processed to the mature form in one step by mitochondrial processing peptidase (MPP), the sequential cleavage by MIP of an octapeptide after initial processing by MPP is a required step for a subgroup of nuclear-encoded precursor proteins destined for the matrix or the inner membrane. The polypeptide is Mitochondrial intermediate peptidase (oct-1) (Neurospora crassa (strain ATCC 24698 / 74-OR23-1A / CBS 708.71 / DSM 1257 / FGSC 987)).